The primary structure comprises 297 residues: N-acetylmuramic acid 6-phosphate etherase (297 aa).

Residues Ala55–Lys218 form the SIS domain. Catalysis depends on Glu83, which acts as the Proton donor. The active site involves Glu114.

This sequence belongs to the GCKR-like family. MurNAc-6-P etherase subfamily. In terms of assembly, homodimer.

It carries out the reaction N-acetyl-D-muramate 6-phosphate + H2O = N-acetyl-D-glucosamine 6-phosphate + (R)-lactate. The protein operates within amino-sugar metabolism; 1,6-anhydro-N-acetylmuramate degradation. It participates in amino-sugar metabolism; N-acetylmuramate degradation. It functions in the pathway cell wall biogenesis; peptidoglycan recycling. Functionally, specifically catalyzes the cleavage of the D-lactyl ether substituent of MurNAc 6-phosphate, producing GlcNAc 6-phosphate and D-lactate. Together with AnmK, is also required for the utilization of anhydro-N-acetylmuramic acid (anhMurNAc) either imported from the medium or derived from its own cell wall murein, and thus plays a role in cell wall recycling. This Salmonella paratyphi A (strain ATCC 9150 / SARB42) protein is N-acetylmuramic acid 6-phosphate etherase.